Here is a 974-residue protein sequence, read N- to C-terminus: Translation initiation factor IF-2 (974 aa).

A disordered region spans residues 31–376 (FVKSASSTVE…APAVGGVRLP (346 aa)). The span at 52 to 68 (PSAKSADSAARPAAKPG) shows a compositional bias: low complexity. The span at 83 to 96 (GPRPGPKPAAPAPA) shows a compositional bias: pro residues. Residues 97–133 (APAAAAPAATPAAQAPAPAAPAASTATPAAPASNAPK) are compositionally biased toward low complexity. Positions 134–147 (PGRPTPAAPAPAAP) are enriched in pro residues. 2 stretches are compositionally biased toward low complexity: residues 148–166 (AAPA…STGA) and 179–191 (RVGN…APAE). 2 stretches are compositionally biased toward pro residues: residues 195 to 210 (PRPA…PRPA) and 253 to 266 (RPSP…PNPG). A compositionally biased stretch (low complexity) spans 267–277 (AMPARSARPAP). Positions 279–332 (GRPGRPGGAPGGRPGGGGGGYRGGGAPGAGAGAPGGGAPAGGFRGRPGGGGRPG) are enriched in gly residues. Basic residues predominate over residues 349 to 358 (RRGRKSKRQK). One can recognise a tr-type G domain in the interval 470–641 (SRPPVVTVMG…AVLLTADAAL (172 aa)). Residues 479 to 486 (GHVDHGKT) form a G1 region. 479–486 (GHVDHGKT) provides a ligand contact to GTP. Residues 504–508 (GITQH) form a G2 region. The G3 stretch occupies residues 529-532 (DTPG). GTP is bound by residues 529 to 533 (DTPGH) and 583 to 586 (NKID). The segment at 583 to 586 (NKID) is G4. A G5 region spans residues 619–621 (SAK).

The protein belongs to the TRAFAC class translation factor GTPase superfamily. Classic translation factor GTPase family. IF-2 subfamily.

The protein resides in the cytoplasm. One of the essential components for the initiation of protein synthesis. Protects formylmethionyl-tRNA from spontaneous hydrolysis and promotes its binding to the 30S ribosomal subunits. Also involved in the hydrolysis of GTP during the formation of the 70S ribosomal complex. The sequence is that of Translation initiation factor IF-2 from Rhodococcus opacus (strain B4).